Here is a 440-residue protein sequence, read N- to C-terminus: Amino acid transporter AVT6D (440 aa).

Transmembrane regions (helical) follow at residues phenylalanine 26–proline 46, alanine 47–leucine 67, alanine 102–isoleucine 122, tryptophan 149–leucine 169, isoleucine 182–leucine 202, glycine 219–phenylalanine 239, isoleucine 262–phenylalanine 282, isoleucine 309–leucine 329, phenylalanine 356–phenylalanine 376, glutamine 377–leucine 397, and isoleucine 410–asparagine 430.

It belongs to the amino acid/polyamine transporter 2 family. Amino acid/auxin permease (AAAP) (TC 2.A.18.6) subfamily.

Its subcellular location is the membrane. In Arabidopsis thaliana (Mouse-ear cress), this protein is Amino acid transporter AVT6D.